Reading from the N-terminus, the 471-residue chain is A-type ATP synthase subunit B (471 aa).

The protein belongs to the ATPase alpha/beta chains family. Has multiple subunits with at least A(3), B(3), C, D, E, F, H, I and proteolipid K(x).

Its subcellular location is the cell membrane. Functionally, component of the A-type ATP synthase that produces ATP from ADP in the presence of a proton gradient across the membrane. The B chain is a regulatory subunit. This Halobacterium salinarum (strain ATCC 29341 / DSM 671 / R1) protein is A-type ATP synthase subunit B.